A 196-amino-acid chain; its full sequence is Carnitine operon protein CaiE (196 aa).

The disordered stretch occupies residues 173–196 (TQPLRQMEGNRPRLQGTTDVAPKR).

This sequence belongs to the transferase hexapeptide repeat family.

It functions in the pathway amine and polyamine metabolism; carnitine metabolism. Functionally, overproduction of CaiE stimulates the activity of CaiB and CaiD. In Escherichia coli (strain SMS-3-5 / SECEC), this protein is Carnitine operon protein CaiE.